Reading from the N-terminus, the 118-residue chain is Elongin-B (118 aa).

Met1 carries the N-acetylmethionine modification. A Ubiquitin-like domain is found at 1–79 (MDVFLMIRRH…QAPATVGLAF (79 aa)). Thr84 carries the post-translational modification Phosphothreonine. Residues 91-118 (EPFSSPPELPDVMKPQDSGGSANEQAVQ) are disordered. Phosphoserine occurs at positions 108 and 111. A compositionally biased stretch (polar residues) spans 108-118 (SGGSANEQAVQ).

The protein belongs to the Elongin B family. Heterotrimer of an A (ELOA, ELOA2 or ELOA3P), ELOB and ELOC subunit. The elongin BC complex interacts with EPOP; leading to recruit the elongin BC complex to Polycomb group (PcG) target genes, thereby restricting excessive activity of the PRC2/EED-EZH2 complex. Component of multiple cullin-RING E3 ubiquitin-protein ligase complexes composed of Elongin BC (ELOB and ELOC), a cullin (either CUL2 or CUL5), a catalytic subunit (either RBX1 or RNF7/RBX2), as well as a substrate adapter protein that can be either ASB2, ASB9, ASB11, KLHDC2, KLHDC3, KLHDC10, APPBP2, FEM1A, FEM1B, FEM1C, LRR1, PCMTD1, SOCS1, SOCS2, SOCS5, SPSB1, SPSB3, ELOA, VHL, WSB1 or RAB40C. As part of the Elongin BC E3 ubiquitin ligase complex; interacts with NRBP1. May also interact with DCUN1D1, DCUN1D2, DCUN1D3 and DCUN1D5. May form oligomers as a KLHDC2/KLHDC3-ELOB-ELOC complex; this interaction is autoinhibitory for the E3 ligase complex as the substrate-binding site of KLHDC2/KLHDC3 is blocked in the oligomer.

It localises to the nucleus. The protein operates within protein modification; protein ubiquitination. SIII, also known as elongin, is a general transcription elongation factor that increases the RNA polymerase II transcription elongation past template-encoded arresting sites. Subunit A is transcriptionally active and its transcription activity is strongly enhanced by binding to the dimeric complex of the SIII regulatory subunits B and C (elongin BC complex). In embryonic stem cells, the elongin BC complex is recruited by EPOP to Polycomb group (PcG) target genes in order generate genomic region that display both active and repressive chromatin properties, an important feature of pluripotent stem cells. In terms of biological role, core component of multiple cullin-2 and cullin-5-RING E3 ubiquitin-protein ligase complexes (ECS complexes), which mediate the ubiquitination of target proteins. By binding to BC-box motifs it seems to link target recruitment subunits, like VHL and members of the SOCS box family, to Cullin/RBX1 modules that activate E2 ubiquitination enzymes. Component the von Hippel-Lindau ubiquitination complex CBC(VHL). A number of ECS complexes (containing either KLHDC2, KLHDC3, KLHDC10, APPBP2, FEM1A, FEM1B or FEM1C as substrate-recognition component) are part of the DesCEND (destruction via C-end degrons) pathway, which recognizes a C-degron located at the extreme C terminus of target proteins, leading to their ubiquitination and degradation. The ECS(ASB9) complex mediates ubiquitination and degradation of CKB. As part of a multisubunit ubiquitin ligase complex, polyubiquitinates monoubiquitinated POLR2A. ECS(LRR1) ubiquitinates MCM7 and promotes CMG replisome disassembly by VCP and chromatin extraction during S-phase. As part of the ECS(RAB40C) complex, mediates ANKRD28 ubiquitination and degradation, thereby inhibiting protein phosphatase 6 (PP6) complex activity and focal adhesion assembly during cell migration. This Mus musculus (Mouse) protein is Elongin-B.